We begin with the raw amino-acid sequence, 134 residues long: MNALAQKTPSPPTLVFTEAAVRKVKGLIDEENNPYLNLRVFITGGGCSGFQYGFTFDEAINSDDLVIEKQLEEEDDDEGGTGQMALVKLLVDPLSLQYLQGAEIDYREDVSGAQFVIRNPNAKTTCGCGSSFAA.

3 residues coordinate iron-sulfur cluster: Cys-47, Cys-126, and Cys-128.

The protein belongs to the HesB/IscA family. As to quaternary structure, homodimer. Requires iron-sulfur cluster as cofactor.

In terms of biological role, required for insertion of 4Fe-4S clusters for at least IspG. The sequence is that of Iron-sulfur cluster insertion protein ErpA from Coxiella burnetii (strain RSA 331 / Henzerling II).